Consider the following 328-residue polypeptide: D-cysteine desulfhydrase (328 aa).

Lys-51 is modified (N6-(pyridoxal phosphate)lysine).

Belongs to the ACC deaminase/D-cysteine desulfhydrase family. As to quaternary structure, homodimer. The cofactor is pyridoxal 5'-phosphate.

It catalyses the reaction D-cysteine + H2O = hydrogen sulfide + pyruvate + NH4(+) + H(+). In terms of biological role, catalyzes the alpha,beta-elimination reaction of D-cysteine and of several D-cysteine derivatives. It could be a defense mechanism against D-cysteine. The sequence is that of D-cysteine desulfhydrase from Shigella sonnei (strain Ss046).